The chain runs to 625 residues: tRNA (uracil-5-)-methyltransferase homolog A (625 aa).

2 disordered regions span residues 1–37 (MSENLDNEGPKPMESCGQESSSALSCPTVSVPPAAPA) and 145–165 (RPKADPMARRRRQEGESEPPV). A compositionally biased stretch (low complexity) spans 27-37 (PTVSVPPAAPA). In terms of domain architecture, RRM spans 73–146 (FKLELQNVPR…RPLSVRLARP (74 aa)). Positions 180-209 (YAEQLERKQLECEQVLQKLAKEIGSTNRAL) form a coiled coil. Phosphoserine is present on S378. 3 residues coordinate S-adenosyl-L-methionine: Q411, E461, and D510. Catalysis depends on C538, which acts as the Nucleophile. Residue E581 is the Proton acceptor of the active site. A disordered region spans residues 594–625 (GTGVLGPHSPPAQPTPGPPDNTLQETGTFPSS). Positions 601–612 (HSPPAQPTPGPP) are enriched in pro residues. The residue at position 602 (S602) is a Phosphoserine. Positions 614–625 (NTLQETGTFPSS) are enriched in polar residues.

The protein belongs to the class I-like SAM-binding methyltransferase superfamily. RNA M5U methyltransferase family.

The protein resides in the cytoplasm. It localises to the cytosol. The catalysed reaction is uridine(54) in tRNA + S-adenosyl-L-methionine = 5-methyluridine(54) in tRNA + S-adenosyl-L-homocysteine + H(+). It catalyses the reaction a uridine in mRNA + S-adenosyl-L-methionine = a 5-methyluridine in mRNA + S-adenosyl-L-homocysteine + H(+). Its function is as follows. S-adenosyl-L-methionine-dependent methyltransferase that catalyzes the formation of 5-methyl-uridine in tRNAs and some mRNAs. Mainly catalyzes the methylation of uridine at position 54 (m5U54) in cytosolic tRNAs. Also able to mediate the formation of 5-methyl-uridine in some mRNAs. The chain is tRNA (uracil-5-)-methyltransferase homolog A from Homo sapiens (Human).